A 175-amino-acid polypeptide reads, in one-letter code: Co-chaperone protein HscB homolog (175 aa).

Residues 2-76 enclose the J domain; it reads NYFALFNLTP…RAEHMLELRG (75 aa).

This sequence belongs to the HscB family. In terms of assembly, interacts with HscA and stimulates its ATPase activity.

Functionally, co-chaperone involved in the maturation of iron-sulfur cluster-containing proteins. Seems to help targeting proteins to be folded toward HscA. The sequence is that of Co-chaperone protein HscB homolog from Pseudoalteromonas atlantica (strain T6c / ATCC BAA-1087).